A 654-amino-acid chain; its full sequence is tRNA 5-methylaminomethyl-2-thiouridine biosynthesis bifunctional protein MnmC (654 aa).

The interval 1–235 (MSDFQHAQLD…KREMLGGTYQ (235 aa)) is tRNA (mnm(5)s(2)U34)-methyltransferase. An FAD-dependent cmnm(5)s(2)U34 oxidoreductase region spans residues 261-654 (VGGGLAGCAS…LRDLVRGQRG (394 aa)).

This sequence in the N-terminal section; belongs to the methyltransferase superfamily. tRNA (mnm(5)s(2)U34)-methyltransferase family. In the C-terminal section; belongs to the DAO family. It depends on FAD as a cofactor.

The protein resides in the cytoplasm. The enzyme catalyses 5-aminomethyl-2-thiouridine(34) in tRNA + S-adenosyl-L-methionine = 5-methylaminomethyl-2-thiouridine(34) in tRNA + S-adenosyl-L-homocysteine + H(+). Catalyzes the last two steps in the biosynthesis of 5-methylaminomethyl-2-thiouridine (mnm(5)s(2)U) at the wobble position (U34) in tRNA. Catalyzes the FAD-dependent demodification of cmnm(5)s(2)U34 to nm(5)s(2)U34, followed by the transfer of a methyl group from S-adenosyl-L-methionine to nm(5)s(2)U34, to form mnm(5)s(2)U34. The polypeptide is tRNA 5-methylaminomethyl-2-thiouridine biosynthesis bifunctional protein MnmC (Pseudomonas paraeruginosa (strain DSM 24068 / PA7) (Pseudomonas aeruginosa (strain PA7))).